Consider the following 467-residue polypeptide: Putative vacuolar protein sorting-associated protein TDA6 (467 aa).

Residues 8–28 traverse the membrane as a helical segment; sequence ILLWFLIVDLSVIRALVLPPL. 3 N-linked (GlcNAc...) asparagine glycosylation sites follow: Asn-61, Asn-124, and Asn-141.

Belongs to the VPS62 family.

It is found in the membrane. In terms of biological role, involved in vacuolar protein sorting. This Saccharomyces cerevisiae (strain ATCC 204508 / S288c) (Baker's yeast) protein is Putative vacuolar protein sorting-associated protein TDA6 (TDA6).